A 305-amino-acid polypeptide reads, in one-letter code: Homoserine kinase (305 aa).

Residue 90–100 (PLARGLGSSAS) participates in ATP binding.

The protein belongs to the GHMP kinase family. Homoserine kinase subfamily.

It is found in the cytoplasm. The catalysed reaction is L-homoserine + ATP = O-phospho-L-homoserine + ADP + H(+). Its pathway is amino-acid biosynthesis; L-threonine biosynthesis; L-threonine from L-aspartate: step 4/5. Catalyzes the ATP-dependent phosphorylation of L-homoserine to L-homoserine phosphate. The sequence is that of Homoserine kinase from Staphylococcus saprophyticus subsp. saprophyticus (strain ATCC 15305 / DSM 20229 / NCIMB 8711 / NCTC 7292 / S-41).